The sequence spans 297 residues: MKRPDYRTLQALDAVIRERGFERAAQKLCITQSAVSQRIKQLENMFGQPLLVRTVPPRPTEQGQKLLALLRQVELLEEEWLGDEQTGSTPLLLSLAVNADSLATWLLPALAPVLADSPIRLNLQVEDETRTQERLRRGEVVGAVSIQHQALPSCLVDKLGALDYLFVSSKPFAEKYFPNGVTRSALLKAPVVAFDHLDDMHQAFLQQNFDLPPGSVPCHIVNSSEAFVQLARQGTTCCMIPHLQIEKELASGELIDLTPGLFQRRMLYWHRFAPESRMMRKVTDALLDYGHKVLRQD.

The region spanning 4 to 60 (PDYRTLQALDAVIRERGFERAAQKLCITQSAVSQRIKQLENMFGQPLLVRTVPPRPT) is the HTH lysR-type domain. Residues 21–40 (FERAAQKLCITQSAVSQRIK) constitute a DNA-binding region (H-T-H motif).

It belongs to the LysR transcriptional regulatory family. As to quaternary structure, homodimer.

Controls the transcription of genes involved in arginine and lysine metabolism. The protein is HTH-type transcriptional regulator ArgP of Escherichia coli O127:H6 (strain E2348/69 / EPEC).